A 275-amino-acid chain; its full sequence is MKMMNGEDANDQMIKESFFITHGNPILTVEDTHPLRPFFETWREKIFSKKPKAILIISGHWETVKPTVNAVHINDTIHDFDDYPAAMYQFKYPAPGEPELARKVEEILKKSGFETAETDQKRGLDHGAWVPLMLMYPEADIPVCQLSVQPHLDGTYHYNLGRALAPLKNDGVLIIGSGSATHPLDETPHYFDGVAPWAAAFDSWLRKALINGRFEEVNIYESKAPNWKLAHPFPEHFYPLHVVLGAAGEKWKAELIHSSWDHGTLCHGSYKFTSA.

Zn(2+) is bound by residues His-22, His-60, His-182, and His-236.

Belongs to the DODA-type extradiol aromatic ring-opening dioxygenase family. Zn(2+) is required as a cofactor.

The enzyme catalyses L-dopa + O2 = 4-(L-alanin-3-yl)-2-hydroxy-cis,cis-muconate 6-semialdehyde + H(+). It participates in pigment biosynthesis; betalain biosynthesis. In terms of biological role, opens the cyclic ring of dihydroxy-phenylalanine (DOPA) between carbons 4 and 5, thus producing an unstable seco-DOPA that rearranges nonenzymatically to betalamic acid. The polypeptide is 4,5-DOPA dioxygenase extradiol 1 (Beta vulgaris (Sugar beet)).